The primary structure comprises 518 residues: Pre-glycoprotein polyprotein GP complex (518 aa).

A lipid anchor (N-myristoyl glycine; by host) is attached at Gly-2. At 2–17 the chain is on the extracellular side; the sequence is GQVIGFFQSLPNIINE. A helical membrane pass occupies residues 18-33; that stretch reads ALNIALICVALIAILK. The Cytoplasmic segment spans residues 34 to 58; that stretch reads GIVNIWKSGLIQLFIFLILAGRSCS. Cys-57 is a Zn(2+) binding site. The Extracellular portion of the chain corresponds to 59–456; sequence HTFQIGRNHE…QGSTPLSLVD (398 aa). Disulfide bonds link Cys-87–Cys-258, Cys-303–Cys-316, Cys-325–Cys-334, and Cys-388–Cys-409. Residues Asn-90, Asn-112, Asn-127, Asn-180, and Asn-251 are each glycosylated (N-linked (GlcNAc...) asparagine; by host). 4 N-linked (GlcNAc...) asparagine; by host glycosylation sites follow: Asn-389, Asn-397, Asn-414, and Asn-419. The helical transmembrane segment at 457-477 threads the bilayer; the sequence is LCFWSTLFYVTTLFAHLVGFP. The Cytoplasmic portion of the chain corresponds to 478–518; it reads THRHILDGPCPKPHRLTKKGICSCGHFGIPGKPVRWVKRSR. Zn(2+)-binding residues include His-479, His-481, Cys-487, His-491, Cys-499, and Cys-501.

It belongs to the arenaviridae GPC protein family. Interacts with glycoprotein G2. Part of the GP complex (GP-C) together with glycoprotein G1 and glycoprotein G2. The GP-complex interacts with protein Z, which interacts with ribonucleocapsid; these interactions may induce virion budding. In terms of assembly, homotrimer; disulfide-linked. In pre-fusion state, G1 homotrimers bind G2 homotrimers via ionic interactions. Part of the GP complex (GP-C) together with glycoprotein G2 and the stable signal peptide. The GP-complex interacts with protein Z, which interacts with ribonucleocapsid; these interactions may induce virion budding. As to quaternary structure, homotrimer. Interacts with the stable signal peptide. In pre-fusion state, G2 homotrimers bind G1 homotrimers via ionic interactions. Part of the GP complex (GP-C) together with glycoprotein G1 and the stable signal peptide. Acidification in the endosome triggers rearrangements, which ultimately leads to a 6 helix bundle formed by the two heptad repeat domains (HR1 and HR2) in post-fusion state. The GP-complex interacts with protein Z, which interacts with ribonucleocapsid; these interactions may induce virion budding. Specific enzymatic cleavages in vivo yield mature proteins. GP-C polyprotein is cleaved in the endoplasmic reticulum by the host protease MBTPS1. Only cleaved glycoprotein is incorporated into virions. Post-translationally, the SSP remains stably associated with the GP complex following cleavage by signal peptidase and plays crucial roles in the trafficking of GP through the secretory pathway. In terms of processing, myristoylation is necessary for GP2-mediated fusion activity.

The protein localises to the virion membrane. The protein resides in the host endoplasmic reticulum membrane. It is found in the host Golgi apparatus membrane. Its subcellular location is the host cell membrane. Its function is as follows. Functions as a cleaved signal peptide that is retained as the third component of the GP complex (GP-C). Helps to stabilize the spike complex in its native conformation. The SSP is required for efficient glycoprotein expression, post-translational maturation cleavage of G1 and G2, glycoprotein transport to the cell surface plasma membrane, formation of infectious virus particles, and acid pH-dependent glycoprotein-mediated cell fusion. Functionally, forms the virion spikes together with glycoprotein G2. The glycoprotein spike trimers are connected to the underlying matrix. Mediates virus attachment to host receptor alpha-dystroglycan DAG1. This attachment induces virion internalization predominantly through clathrin- and caveolin-independent endocytosis. Forms the virion spikes together with glycoprotein G1. The glycoprotein spike trimers are connected to the underlying matrix. Class I viral fusion protein that directs fusion of viral and host endosomal membranes, leading to delivery of the nucleocapsid into the cytoplasm. Membrane fusion is mediated by irreversible conformational changes induced by acidification. In Bolomys (OLVV), this protein is Pre-glycoprotein polyprotein GP complex.